A 179-amino-acid chain; its full sequence is Adenine phosphoribosyltransferase (179 aa).

This sequence belongs to the purine/pyrimidine phosphoribosyltransferase family. Homodimer.

The protein resides in the cytoplasm. The enzyme catalyses AMP + diphosphate = 5-phospho-alpha-D-ribose 1-diphosphate + adenine. Its pathway is purine metabolism; AMP biosynthesis via salvage pathway; AMP from adenine: step 1/1. Catalyzes a salvage reaction resulting in the formation of AMP, that is energically less costly than de novo synthesis. This Haemophilus ducreyi (strain 35000HP / ATCC 700724) protein is Adenine phosphoribosyltransferase.